The chain runs to 382 residues: Gibberellin 2-beta-dioxygenase 1 (382 aa).

A Fe2OG dioxygenase domain is found at 189–321 (DSDCLLRINH…RLSTIYFASP (133 aa)). Tyrosine 199 serves as a coordination point for 2-oxoglutarate. Fe cation-binding residues include histidine 241, aspartate 243, and histidine 302. 2-oxoglutarate is bound by residues arginine 312 and serine 314.

Belongs to the iron/ascorbate-dependent oxidoreductase family. GA2OX subfamily. Requires L-ascorbate as cofactor. It depends on Fe(2+) as a cofactor. In terms of tissue distribution, expressed in roots, shoot apex, and in the basal region of leaf primordia and young leaves.

It carries out the reaction gibberellin A1 + 2-oxoglutarate + O2 = gibberellin A8 + succinate + CO2. Functionally, catalyzes the 2-beta-hydroxylation of several biologically active gibberellins, leading to the homeostatic regulation of their endogenous level. Catabolism of gibberellins (GAs) plays a central role in plant development. Controls the level of bioactive GAs in the shoot apical meristem, which regulates the vegetative to reproductive phase transition. In vitro, converts GA1, GA4, GA9, GA20, and GA44 to the corresponding 2-beta-hydroxylated products GA8, GA34, GA51, GA29, and GA98, respectively. The chain is Gibberellin 2-beta-dioxygenase 1 from Oryza sativa subsp. japonica (Rice).